Consider the following 505-residue polypeptide: Aspartyl/glutamyl-tRNA(Asn/Gln) amidotransferase subunit B (505 aa).

Belongs to the GatB/GatE family. GatB subfamily. In terms of assembly, heterotrimer of A, B and C subunits.

It catalyses the reaction L-glutamyl-tRNA(Gln) + L-glutamine + ATP + H2O = L-glutaminyl-tRNA(Gln) + L-glutamate + ADP + phosphate + H(+). It carries out the reaction L-aspartyl-tRNA(Asn) + L-glutamine + ATP + H2O = L-asparaginyl-tRNA(Asn) + L-glutamate + ADP + phosphate + 2 H(+). Allows the formation of correctly charged Asn-tRNA(Asn) or Gln-tRNA(Gln) through the transamidation of misacylated Asp-tRNA(Asn) or Glu-tRNA(Gln) in organisms which lack either or both of asparaginyl-tRNA or glutaminyl-tRNA synthetases. The reaction takes place in the presence of glutamine and ATP through an activated phospho-Asp-tRNA(Asn) or phospho-Glu-tRNA(Gln). The sequence is that of Aspartyl/glutamyl-tRNA(Asn/Gln) amidotransferase subunit B from Streptomyces avermitilis (strain ATCC 31267 / DSM 46492 / JCM 5070 / NBRC 14893 / NCIMB 12804 / NRRL 8165 / MA-4680).